Consider the following 625-residue polypeptide: Voltage-gated potassium channel KCNC4 (625 aa).

2 disordered regions span residues 1 to 24 (MISS…SKTC) and 65 to 86 (LADP…SSGS). The inactivation gate stretch occupies residues 1 to 28 (MISSVCVSSYRGRKSGNKPPSKTCLKEE). Residues 1–227 (MISSVCVSSY…EDPYSSRAAR (227 aa)) lie on the Cytoplasmic side of the membrane. Ser-8, Ser-9, Ser-15, and Ser-21 each carry phosphoserine. The segment covering 77 to 86 (DGGGAGSSGS) has biased composition (gly residues). The Zn(2+) site is built by His-117, Cys-123, Cys-144, and Cys-145. Residues 228-248 (VVAFASLFFILVSITTFCLET) form a helical membrane-spanning segment. N-linked (GlcNAc...) asparagine glycosylation is found at Asn-257 and Asn-266. Residues 279–299 (EPILTYIEGVCVMWFTLEFLV) traverse the membrane as a helical segment. The Cytoplasmic portion of the chain corresponds to 300 to 313 (RIVCCPDTLDFVKN). The helical transmembrane segment at 314–334 (LLNIIDFVAILPFYLEVGLSG) threads the bilayer. A helical; Voltage-sensor membrane pass occupies residues 346–365 (FLRVVRFVRILRIFKLTRHF). Residues 366–381 (VGLRVLGHTLRASTNE) are Cytoplasmic-facing. A helical transmembrane segment spans residues 382–402 (FLLLIIFLALGVLIFATMIYY). The K(+) site is built by Thr-437, Leu-438, Gly-439, and Tyr-440. A Selectivity filter motif is present at residues 437–442 (TLGYGD). The chain crosses the membrane as a helical span at residues 453-473 (VGALCALAGVLTIAMPVPVIV). At 474 to 625 (NNFGMYYSLA…CVPVSHTCAL (152 aa)) the chain is on the cytoplasmic side. Residues 490–581 (PKKRKKHVPR…RRALRRSGTR (92 aa)) form a disordered region. Residues 528-543 (AREEGMVERKRADSKQ) show a composition bias toward basic and acidic residues.

Belongs to the potassium channel family. C (Shaw) (TC 1.A.1.2) subfamily. Kv3.4/KCNC4 sub-subfamily. Homotetramer. Heterotetramer of potassium channel proteins. Post-translationally, phosphorylation of serine residues in the inactivation gate inhibits rapid channel closure.

It is found in the membrane. The catalysed reaction is K(+)(in) = K(+)(out). In terms of biological role, voltage-gated potassium channel that opens in response to the voltage difference across the membrane, forming a potassium-selective channel through which potassium ions pass in accordance with their electrochemical gradient. The channel displays rapid activation and inactivation kinetics. In Rattus norvegicus (Rat), this protein is Voltage-gated potassium channel KCNC4.